A 131-amino-acid chain; its full sequence is Small ribosomal subunit protein uS8 (131 aa).

Belongs to the universal ribosomal protein uS8 family. In terms of assembly, part of the 30S ribosomal subunit. Contacts proteins S5 and S12.

In terms of biological role, one of the primary rRNA binding proteins, it binds directly to 16S rRNA central domain where it helps coordinate assembly of the platform of the 30S subunit. The protein is Small ribosomal subunit protein uS8 of Wolbachia sp. subsp. Brugia malayi (strain TRS).